The sequence spans 177 residues: ATP synthase subunit delta (177 aa).

Belongs to the ATPase delta chain family. As to quaternary structure, F-type ATPases have 2 components, F(1) - the catalytic core - and F(0) - the membrane proton channel. F(1) has five subunits: alpha(3), beta(3), gamma(1), delta(1), epsilon(1). F(0) has three main subunits: a(1), b(2) and c(10-14). The alpha and beta chains form an alternating ring which encloses part of the gamma chain. F(1) is attached to F(0) by a central stalk formed by the gamma and epsilon chains, while a peripheral stalk is formed by the delta and b chains.

Its subcellular location is the cell membrane. In terms of biological role, f(1)F(0) ATP synthase produces ATP from ADP in the presence of a proton or sodium gradient. F-type ATPases consist of two structural domains, F(1) containing the extramembraneous catalytic core and F(0) containing the membrane proton channel, linked together by a central stalk and a peripheral stalk. During catalysis, ATP synthesis in the catalytic domain of F(1) is coupled via a rotary mechanism of the central stalk subunits to proton translocation. Its function is as follows. This protein is part of the stalk that links CF(0) to CF(1). It either transmits conformational changes from CF(0) to CF(1) or is implicated in proton conduction. The protein is ATP synthase subunit delta of Caldanaerobacter subterraneus subsp. tengcongensis (strain DSM 15242 / JCM 11007 / NBRC 100824 / MB4) (Thermoanaerobacter tengcongensis).